The following is a 163-amino-acid chain: Nucleotide-binding protein KPK_4305 (163 aa).

This sequence belongs to the YajQ family.

In terms of biological role, nucleotide-binding protein. This chain is Nucleotide-binding protein KPK_4305, found in Klebsiella pneumoniae (strain 342).